We begin with the raw amino-acid sequence, 94 residues long: Beta-defensin 132 (94 aa).

An N-terminal signal peptide occupies residues 1–22 (MKFLLLVLAALGFLTQVIPASA). 2 disulfide bridges follow: Cys27–Cys55 and Cys39–Cys56. The tract at residues 72–94 (GNHWQSRRNTQRKDKKQQTTVTS) is disordered. The segment covering 76–86 (QSRRNTQRKDK) has biased composition (basic residues).

The protein belongs to the beta-defensin family.

It localises to the secreted. Its function is as follows. Has antibacterial activity. The polypeptide is Beta-defensin 132 (DEFB132) (Gorilla gorilla gorilla (Western lowland gorilla)).